Consider the following 509-residue polypeptide: 5-hydroxytryptamine receptor (509 aa).

Over 1 to 99 (MANFTFGDLA…YSHEHLVLTS (99 aa)) the chain is Extracellular. 6 N-linked (GlcNAc...) asparagine glycosylation sites follow: asparagine 3, asparagine 47, asparagine 58, asparagine 68, asparagine 72, and asparagine 78. A helical membrane pass occupies residues 100–122 (VILGLFVLCCIIGNCFVIAAVML). The Cytoplasmic portion of the chain corresponds to 123–132 (ERSLHNVANY). Residues 133 to 154 (LILSLAVADLMVAVLVMPLSVV) form a helical membrane-spanning segment. Residues 155–169 (SEISKVWFLHSEVCD) lie on the Extracellular side of the membrane. Cysteine 168 and cysteine 246 are oxidised to a cystine. A helical transmembrane segment spans residues 170 to 191 (MWISVDVLCCTASILHLVAIAM). Topologically, residues 192–210 (DRYWAVTSIDYIRRRSARR) are cytoplasmic. Residues 211–233 (ILLMIMVVWIVALFISIPPLFGW) form a helical membrane-spanning segment. Over 234-259 (RDPNNDPDKTGTCIISQDKGYTIFST) the chain is Extracellular. A helical transmembrane segment spans residues 260 to 281 (VGAFYLPMLVMMIIYIRIWLVA). The Cytoplasmic portion of the chain corresponds to 282–432 (RSRIRKDKFQ…LKRERKAART (151 aa)). The disordered stretch occupies residues 323 to 372 (SPDSTTEKKKRRAPFKSYGCSPRPERKKNRAKKLPENANGVNSNSSSSER). Residues 433–456 (LAIITGAFLICWLPFFIIALIGPF) traverse the membrane as a helical segment. Topologically, residues 457-465 (VDPEGIPPF) are extracellular. A helical membrane pass occupies residues 466–488 (ARSFVLWLGYFNSLLNPIIYTIF). The Cytoplasmic portion of the chain corresponds to 489 to 509 (SPEFRSAFQKILFGKYRRGHR).

It belongs to the G-protein coupled receptor 1 family.

The protein localises to the cell membrane. This is a receptor for 5-hydroxytryptamine (serotonin), a biogenic hormone that function as a neurotransmitter, a hormone, and a mitogen. The sequence is that of 5-hydroxytryptamine receptor from Lymnaea stagnalis (Great pond snail).